We begin with the raw amino-acid sequence, 584 residues long: 2-succinyl-5-enolpyruvyl-6-hydroxy-3-cyclohexene-1-carboxylate synthase (584 aa).

Belongs to the TPP enzyme family. MenD subfamily. In terms of assembly, homodimer. Mg(2+) is required as a cofactor. Mn(2+) serves as cofactor. Requires thiamine diphosphate as cofactor.

The catalysed reaction is isochorismate + 2-oxoglutarate + H(+) = 5-enolpyruvoyl-6-hydroxy-2-succinyl-cyclohex-3-ene-1-carboxylate + CO2. It functions in the pathway quinol/quinone metabolism; 1,4-dihydroxy-2-naphthoate biosynthesis; 1,4-dihydroxy-2-naphthoate from chorismate: step 2/7. It participates in quinol/quinone metabolism; menaquinone biosynthesis. In terms of biological role, catalyzes the thiamine diphosphate-dependent decarboxylation of 2-oxoglutarate and the subsequent addition of the resulting succinic semialdehyde-thiamine pyrophosphate anion to isochorismate to yield 2-succinyl-5-enolpyruvyl-6-hydroxy-3-cyclohexene-1-carboxylate (SEPHCHC). The sequence is that of 2-succinyl-5-enolpyruvyl-6-hydroxy-3-cyclohexene-1-carboxylate synthase from Bacillus anthracis.